A 145-amino-acid chain; its full sequence is Peptide methionine sulfoxide reductase MsrB (145 aa).

A MsrB domain is found at 4 to 127 (KEELRQRIGD…NSAALKFIPY (124 aa)). Residue Cys-116 is the Nucleophile of the active site.

Belongs to the MsrB Met sulfoxide reductase family.

The catalysed reaction is L-methionyl-[protein] + [thioredoxin]-disulfide + H2O = L-methionyl-(R)-S-oxide-[protein] + [thioredoxin]-dithiol. This Streptococcus equi subsp. zooepidemicus (strain H70) protein is Peptide methionine sulfoxide reductase MsrB.